A 357-amino-acid polypeptide reads, in one-letter code: MQKVKEMIGSINELDTKAQQQMEQHLNTLTKPLGSLGLLESLAIKIAGITGHTQPEIDPATVIVMVADHGVAAEGVSAYPSEVTQQMVHNFITGGAAINVLSRVSNASVQIVDIGVNGTLQLPGLINKNVRHGTNNMAQGPSMEREEAIAAIEVGIEVAQAAIQNGAKLLALGEMGIGNTTASSAMLAALEQVPVEQIVGFGTGLSHEGKEKKVAVIKRAIEVNQPNAADPIDVLAKVGGLEIAGLAGIVLGAAAWRIPVLVDGFITAVAALTAVRIAPLCVHYLIASHQSVEPGHVCVNKLLGLTPLVNLNLRLGEGSGTAIALPIVRSAIRIAHEMATFEQAGVSGAIEDVGKEK.

Residue Glu-317 is the Proton acceptor of the active site.

This sequence belongs to the CobT family.

The enzyme catalyses 5,6-dimethylbenzimidazole + nicotinate beta-D-ribonucleotide = alpha-ribazole 5'-phosphate + nicotinate + H(+). It participates in nucleoside biosynthesis; alpha-ribazole biosynthesis; alpha-ribazole from 5,6-dimethylbenzimidazole: step 1/2. Functionally, catalyzes the synthesis of alpha-ribazole-5'-phosphate from nicotinate mononucleotide (NAMN) and 5,6-dimethylbenzimidazole (DMB). This is Nicotinate-nucleotide--dimethylbenzimidazole phosphoribosyltransferase from Halalkalibacterium halodurans (strain ATCC BAA-125 / DSM 18197 / FERM 7344 / JCM 9153 / C-125) (Bacillus halodurans).